The following is a 454-amino-acid chain: Bifunctional protein GlmU (454 aa).

The pyrophosphorylase stretch occupies residues M1–R227. UDP-N-acetyl-alpha-D-glucosamine-binding positions include L9–G12, K23, Q74, G79–T80, Y101–D103, G138, E152, N167, and N225. D103 contacts Mg(2+). N225 serves as a coordination point for Mg(2+). Positions L228–A248 are linker. Positions G249–K454 are N-acetyltransferase. UDP-N-acetyl-alpha-D-glucosamine-binding residues include R331 and K349. The Proton acceptor role is filled by H361. UDP-N-acetyl-alpha-D-glucosamine contacts are provided by Y364 and N375. Acetyl-CoA contacts are provided by residues A378, N384–Y385, S403, A421, and R438.

In the N-terminal section; belongs to the N-acetylglucosamine-1-phosphate uridyltransferase family. This sequence in the C-terminal section; belongs to the transferase hexapeptide repeat family. In terms of assembly, homotrimer. Mg(2+) serves as cofactor.

It localises to the cytoplasm. It catalyses the reaction alpha-D-glucosamine 1-phosphate + acetyl-CoA = N-acetyl-alpha-D-glucosamine 1-phosphate + CoA + H(+). The enzyme catalyses N-acetyl-alpha-D-glucosamine 1-phosphate + UTP + H(+) = UDP-N-acetyl-alpha-D-glucosamine + diphosphate. It functions in the pathway nucleotide-sugar biosynthesis; UDP-N-acetyl-alpha-D-glucosamine biosynthesis; N-acetyl-alpha-D-glucosamine 1-phosphate from alpha-D-glucosamine 6-phosphate (route II): step 2/2. Its pathway is nucleotide-sugar biosynthesis; UDP-N-acetyl-alpha-D-glucosamine biosynthesis; UDP-N-acetyl-alpha-D-glucosamine from N-acetyl-alpha-D-glucosamine 1-phosphate: step 1/1. It participates in bacterial outer membrane biogenesis; LPS lipid A biosynthesis. Functionally, catalyzes the last two sequential reactions in the de novo biosynthetic pathway for UDP-N-acetylglucosamine (UDP-GlcNAc). The C-terminal domain catalyzes the transfer of acetyl group from acetyl coenzyme A to glucosamine-1-phosphate (GlcN-1-P) to produce N-acetylglucosamine-1-phosphate (GlcNAc-1-P), which is converted into UDP-GlcNAc by the transfer of uridine 5-monophosphate (from uridine 5-triphosphate), a reaction catalyzed by the N-terminal domain. In Actinobacillus succinogenes (strain ATCC 55618 / DSM 22257 / CCUG 43843 / 130Z), this protein is Bifunctional protein GlmU.